The following is a 257-amino-acid chain: NAD-capped RNA hydrolase NudC (257 aa).

The substrate site is built by Lys-25 and Arg-69. Positions 98 and 101 each coordinate Zn(2+). Residue Glu-111 coordinates substrate. Residues Cys-116 and Cys-119 each contribute to the Zn(2+) site. Tyr-124 is a binding site for substrate. Residues 125–248 (PQIAPCIIVA…TVARRLIEDT (124 aa)) form the Nudix hydrolase domain. A divalent metal cation contacts are provided by Ala-158, Glu-174, and Glu-178. Positions 159 to 180 (GFVEVGETLEQAVAREVMEESG) match the Nudix box motif. 192-199 (QPWPFPQS) is a substrate binding site. Residue Glu-219 coordinates a divalent metal cation. Residue Ala-241 participates in substrate binding.

The protein belongs to the Nudix hydrolase family. NudC subfamily. Homodimer. It depends on Mg(2+) as a cofactor. The cofactor is Mn(2+). Zn(2+) is required as a cofactor.

The enzyme catalyses a 5'-end NAD(+)-phospho-ribonucleoside in mRNA + H2O = a 5'-end phospho-adenosine-phospho-ribonucleoside in mRNA + beta-nicotinamide D-ribonucleotide + 2 H(+). It catalyses the reaction NAD(+) + H2O = beta-nicotinamide D-ribonucleotide + AMP + 2 H(+). It carries out the reaction NADH + H2O = reduced beta-nicotinamide D-ribonucleotide + AMP + 2 H(+). Its function is as follows. mRNA decapping enzyme that specifically removes the nicotinamide adenine dinucleotide (NAD) cap from a subset of mRNAs by hydrolyzing the diphosphate linkage to produce nicotinamide mononucleotide (NMN) and 5' monophosphate mRNA. The NAD-cap is present at the 5'-end of some mRNAs and stabilizes RNA against 5'-processing. Has preference for mRNAs with a 5'-end purine. Catalyzes the hydrolysis of a broad range of dinucleotide pyrophosphates. This Escherichia coli O45:K1 (strain S88 / ExPEC) protein is NAD-capped RNA hydrolase NudC.